The primary structure comprises 458 residues: Bifunctional protein GlmU (458 aa).

The segment at 1-228 (MHPKLDILIL…DWEVLGVNSK (228 aa)) is pyrophosphorylase. UDP-N-acetyl-alpha-D-glucosamine is bound by residues 10-13 (LAAG), K24, Q75, 80-81 (GT), 102-104 (YGD), G139, E153, N168, and N226. D104 serves as a coordination point for Mg(2+). A Mg(2+)-binding site is contributed by N226. Residues 229–249 (AQLAELERIHQNEVAQRLLAD) form a linker region. The N-acetyltransferase stretch occupies residues 250–458 (GVTLMDPARL…KRPIKPKKEG (209 aa)). Residues R332 and K350 each coordinate UDP-N-acetyl-alpha-D-glucosamine. H362 functions as the Proton acceptor in the catalytic mechanism. The UDP-N-acetyl-alpha-D-glucosamine site is built by Y365 and N376. Acetyl-CoA-binding positions include A379, 385–386 (NY), S404, A422, and R439.

This sequence in the N-terminal section; belongs to the N-acetylglucosamine-1-phosphate uridyltransferase family. It in the C-terminal section; belongs to the transferase hexapeptide repeat family. As to quaternary structure, homotrimer. It depends on Mg(2+) as a cofactor.

The protein resides in the cytoplasm. It carries out the reaction alpha-D-glucosamine 1-phosphate + acetyl-CoA = N-acetyl-alpha-D-glucosamine 1-phosphate + CoA + H(+). The enzyme catalyses N-acetyl-alpha-D-glucosamine 1-phosphate + UTP + H(+) = UDP-N-acetyl-alpha-D-glucosamine + diphosphate. The protein operates within nucleotide-sugar biosynthesis; UDP-N-acetyl-alpha-D-glucosamine biosynthesis; N-acetyl-alpha-D-glucosamine 1-phosphate from alpha-D-glucosamine 6-phosphate (route II): step 2/2. Its pathway is nucleotide-sugar biosynthesis; UDP-N-acetyl-alpha-D-glucosamine biosynthesis; UDP-N-acetyl-alpha-D-glucosamine from N-acetyl-alpha-D-glucosamine 1-phosphate: step 1/1. It functions in the pathway bacterial outer membrane biogenesis; LPS lipid A biosynthesis. In terms of biological role, catalyzes the last two sequential reactions in the de novo biosynthetic pathway for UDP-N-acetylglucosamine (UDP-GlcNAc). The C-terminal domain catalyzes the transfer of acetyl group from acetyl coenzyme A to glucosamine-1-phosphate (GlcN-1-P) to produce N-acetylglucosamine-1-phosphate (GlcNAc-1-P), which is converted into UDP-GlcNAc by the transfer of uridine 5-monophosphate (from uridine 5-triphosphate), a reaction catalyzed by the N-terminal domain. This Thiobacillus denitrificans (strain ATCC 25259 / T1) protein is Bifunctional protein GlmU.